Here is a 308-residue protein sequence, read N- to C-terminus: Glutaminase (308 aa).

S66, N117, E161, N168, Y192, Y244, and V262 together coordinate substrate.

It belongs to the glutaminase family. As to quaternary structure, homotetramer.

It catalyses the reaction L-glutamine + H2O = L-glutamate + NH4(+). In Shigella dysenteriae serotype 1 (strain Sd197), this protein is Glutaminase.